Here is a 202-residue protein sequence, read N- to C-terminus: Probable GTP-binding protein EngB (202 aa).

Residues V26–I200 enclose the EngB-type G domain. GTP-binding positions include G34 to S41, G61 to T65, D79 to G82, N146 to D149, and F179 to S181. The Mg(2+) site is built by S41 and T63.

The protein belongs to the TRAFAC class TrmE-Era-EngA-EngB-Septin-like GTPase superfamily. EngB GTPase family. It depends on Mg(2+) as a cofactor.

Its function is as follows. Necessary for normal cell division and for the maintenance of normal septation. This chain is Probable GTP-binding protein EngB, found in Baumannia cicadellinicola subsp. Homalodisca coagulata.